The following is a 335-amino-acid chain: Dihydroorotate dehydrogenase (quinone) (335 aa).

FMN is bound by residues 59–63 (AGADK) and threonine 83. Residue lysine 63 coordinates substrate. 108–112 (NRNGF) is a substrate binding site. Positions 136 and 169 each coordinate FMN. Substrate is bound at residue asparagine 169. Serine 172 (nucleophile) is an active-site residue. Substrate is bound at residue asparagine 174. FMN is bound by residues lysine 214 and glycine 242. A substrate-binding site is contributed by 243 to 244 (NT). FMN contacts are provided by residues glycine 265, glycine 294, and 315-316 (YS).

Belongs to the dihydroorotate dehydrogenase family. Type 2 subfamily. As to quaternary structure, monomer. FMN is required as a cofactor.

The protein resides in the cell membrane. It catalyses the reaction (S)-dihydroorotate + a quinone = orotate + a quinol. Its pathway is pyrimidine metabolism; UMP biosynthesis via de novo pathway; orotate from (S)-dihydroorotate (quinone route): step 1/1. Functionally, catalyzes the conversion of dihydroorotate to orotate with quinone as electron acceptor. The protein is Dihydroorotate dehydrogenase (quinone) of Glaesserella parasuis serovar 5 (strain SH0165) (Haemophilus parasuis).